The following is a 94-amino-acid chain: FXYD domain-containing ion transport regulator 6 (94 aa).

Residues 1–17 (METVLVLCSLLAPVVLA) form the signal peptide. Residues 18-34 (SAAEKEKEKDPFYYDYQ) lie on the Extracellular side of the membrane. Residues 35 to 57 (TLRIGGLVFAVVLFSVGILLILS) form a helical membrane-spanning segment. Topologically, residues 58–94 (RRCKCSFNQKPRAPGDEEAQVENLITTNAAEPQKAEN) are cytoplasmic.

The protein belongs to the FXYD family. Regulatory subunit of the sodium/potassium-transporting ATPase which is composed of a catalytic alpha subunit, a non-catalytic beta subunit and an additional regulatory subunit. The regulatory subunit, a member of the FXYD protein family, modulates the enzymatic activity in a tissue- and isoform-specific way by changing affinities of the Na+/K+-ATPase toward Na(+), K(+) or ATP.

It localises to the cell membrane. Associates with and regulates the activity of the sodium/potassium-transporting ATPase (NKA) which catalyzes the hydrolysis of ATP coupled with the exchange of Na(+) and K(+) ions across the plasma membrane. Reduces the apparent affinity for intracellular Na(+) with no change in the apparent affinity for extracellular K(+). In addition to modulating NKA kinetics, may also function as a regulator of NKA localization to the plasma membrane. In Mus musculus (Mouse), this protein is FXYD domain-containing ion transport regulator 6 (Fxyd6).